Reading from the N-terminus, the 188-residue chain is Archaemetzincin (188 aa).

His137 contacts Zn(2+). Glu138 functions as the Proton acceptor in the catalytic mechanism. His141, His147, Cys148, Cys153, Cys172, and Cys175 together coordinate Zn(2+).

This sequence belongs to the peptidase M54 family. Monomer. Requires Zn(2+) as cofactor.

Functionally, probable zinc metalloprotease whose natural substrate is unknown. The protein is Archaemetzincin of Pyrococcus abyssi (strain GE5 / Orsay).